The following is a 1215-amino-acid chain: Reverse gyrase 2 (1215 aa).

The RG N-terminal-type zinc finger occupies 3–44 (GGVNAVYMGLCYNCGGNIDEDRLEKGLPCARCLPSPPRRATP). Zn(2+)-binding residues include cysteine 13, cysteine 16, cysteine 31, and cysteine 34. Residues glutamine 89 and 106–113 (APTGVGKS) each bind ATP. The 157-residue stretch at 93–249 (AKRLVKGDSF…SLVKARLKLY (157 aa)) folds into the Helicase ATP-binding domain. Positions 209–212 (DDVD) match the DEAD box motif. Residues 614 to 1215 (VRVKTTLLVV…TGDVMGQSEA (602 aa)) form a topoisomerase I region. The Toprim domain occupies 618–783 (TTLLVVESPT…NVRRGRFHEV (166 aa)). A Mg(2+)-binding site is contributed by glutamate 624. Residues 702-729 (IKRCLDCGAQHTSSSPFCPRCGSPRQVD) form an RG C-terminal-type zinc finger. Zn(2+)-binding residues include cysteine 705, cysteine 708, cysteine 719, and cysteine 722. Aspartate 752 serves as a coordination point for Mg(2+). Positions 799-1200 (EKSLIEAQKV…SVWRMVDEAV (402 aa)) constitute a Topo IA-type catalytic domain. The O-(5'-phospho-DNA)-tyrosine intermediate role is filled by tyrosine 943.

It in the N-terminal section; belongs to the DEAD box helicase family. DDVD subfamily. This sequence in the C-terminal section; belongs to the type IA topoisomerase family. In terms of assembly, monomer. Zn(2+) serves as cofactor. It depends on Mg(2+) as a cofactor.

The protein resides in the cytoplasm. The enzyme catalyses ATP + H2O = ADP + phosphate + H(+). Functionally, modifies the topological state of DNA by introducing positive supercoils in an ATP-dependent process, increasing the linking number in steps of +1. Binds to single-stranded DNA, transiently cleaves and then rejoins the ends, introducing a positive supercoil in the process. The scissile phosphodiester is attacked by the catalytic tyrosine of the enzyme, resulting in the formation of a DNA-(5'-phosphotyrosyl)-enzyme intermediate. Probably involved in rewinding DNA strands in regions of the chromosome that have opened up to allow replication, transcription, DNA repair and/or for DNA protection. The sequence is that of Reverse gyrase 2 from Aeropyrum pernix (strain ATCC 700893 / DSM 11879 / JCM 9820 / NBRC 100138 / K1).